A 320-amino-acid polypeptide reads, in one-letter code: Lipoyl synthase (320 aa).

The tract at residues 1–26 (MVTVVDRVTSRRLRHPEKMHRPDTSI) is disordered. Positions 59, 64, 70, 85, 89, 92, and 298 each coordinate [4Fe-4S] cluster. The region spanning 71–287 (WSQRHASFMI…AKIGKVKGFL (217 aa)) is the Radical SAM core domain.

The protein belongs to the radical SAM superfamily. Lipoyl synthase family. The cofactor is [4Fe-4S] cluster.

Its subcellular location is the cytoplasm. The catalysed reaction is [[Fe-S] cluster scaffold protein carrying a second [4Fe-4S](2+) cluster] + N(6)-octanoyl-L-lysyl-[protein] + 2 oxidized [2Fe-2S]-[ferredoxin] + 2 S-adenosyl-L-methionine + 4 H(+) = [[Fe-S] cluster scaffold protein] + N(6)-[(R)-dihydrolipoyl]-L-lysyl-[protein] + 4 Fe(3+) + 2 hydrogen sulfide + 2 5'-deoxyadenosine + 2 L-methionine + 2 reduced [2Fe-2S]-[ferredoxin]. It functions in the pathway protein modification; protein lipoylation via endogenous pathway; protein N(6)-(lipoyl)lysine from octanoyl-[acyl-carrier-protein]: step 2/2. Catalyzes the radical-mediated insertion of two sulfur atoms into the C-6 and C-8 positions of the octanoyl moiety bound to the lipoyl domains of lipoate-dependent enzymes, thereby converting the octanoylated domains into lipoylated derivatives. The sequence is that of Lipoyl synthase from Bartonella quintana (strain Toulouse) (Rochalimaea quintana).